A 558-amino-acid chain; its full sequence is Cytochrome c oxidase subunit 1-beta (558 aa).

The Cytoplasmic segment spans residues 1 to 28 (MADAAVHGHGDHHDTRGFFTRWFMSTNH). Residues 29-59 (KDIGILYLFTAGIVGLISVCFTVYMRMELQH) form a helical membrane-spanning segment. At 60-82 (PGVQYMCLEGARLIADASAECTP) the chain is on the periplasmic side. C66 and C80 are oxidised to a cystine. Residues 83 to 120 (NGHLWNVMITYHGVLMMFFVVIPALFGGFGNYFMPLHI) form a helical membrane-spanning segment. Residue H94 participates in Fe(II)-heme a binding. Over 121 to 126 (GAPDMA) the chain is Cytoplasmic. A helical transmembrane segment spans residues 127–151 (FPRLNNLSYWMYVCGVALGVASLLA). The Periplasmic segment spans residues 152–176 (PGGNDQMGSGVGWVLYPPLSTTEAG). Residues 177–206 (YSMDLAIFAVHVSGASSILGAINIITTFLN) traverse the membrane as a helical segment. Residues 207–217 (MRAPGMTLFKV) are Cytoplasmic-facing. The chain crosses the membrane as a helical span at residues 218–251 (PLFAWSVFITAWLILLSLPVLAGAITMLLMDRNF). At 252–262 (GTQFFDPAGGG) the chain is on the periplasmic side. The helical transmembrane segment at 263 to 299 (DPVLYQHILWFFGHPEVYIIILPGFGIISHVISTFAK) threads the bilayer. The Cu cation site is built by H276 and Y280. The 1'-histidyl-3'-tyrosine (His-Tyr) cross-link spans 276-280 (HPEVY). The Cytoplasmic portion of the chain corresponds to 300–303 (KPIF). The helical transmembrane segment at 304–331 (GYLPMVLAMAAIGILGFVVWAHHMYTAG) threads the bilayer. Cu cation-binding residues include H325 and H326. Position 332 (M332) is a topological domain, periplasmic. A helical transmembrane segment spans residues 333-364 (SLTQQAYFMLATMTIAVPTGIKVFSWIATMWG). Residues 365 to 369 (GSIEF) lie on the Cytoplasmic side of the membrane. A helical transmembrane segment spans residues 370–395 (KTPMLWAFGFLFLFTVGGVTGVVLSQ). Residues 396 to 404 (APLDRVYHD) are Periplasmic-facing. Residues 405-437 (TYYVVAHFHYVMSLGAVFGIFAGVYYWIGKMSG) form a helical membrane-spanning segment. Residue H411 participates in heme a3 binding. H413 provides a ligand contact to Fe(II)-heme a. Topologically, residues 438–440 (RQY) are cytoplasmic. A helical membrane pass occupies residues 441-469 (PEWAGQLHFWMMFIGSNLIFFPQHFLGRQ). Residues 470–478 (GMPRRYIDY) are Periplasmic-facing. Residues 479-514 (PVEFAYWNNISSIGAYISFASFLFFIGIVFYTLFAG) traverse the membrane as a helical segment. Over 515–558 (KRVNVPNYWNEHADTLEWTLPSPPPEHTFETLPKREDWDRAHAH) the chain is Cytoplasmic.

This sequence belongs to the heme-copper respiratory oxidase family. Cu(2+) serves as cofactor. Heme is required as a cofactor. Post-translationally, his-276 and Tyr-280 are involved in the formation of a copper-coordinated covalent cross-link at the active site of the catalytic subunit I.

The protein resides in the cell inner membrane. The catalysed reaction is 4 Fe(II)-[cytochrome c] + O2 + 8 H(+)(in) = 4 Fe(III)-[cytochrome c] + 2 H2O + 4 H(+)(out). It functions in the pathway energy metabolism; oxidative phosphorylation. Functionally, subunit I and II form the functional core of the enzyme complex. Electrons originating in cytochrome c are transferred via heme a and Cu(A) to the binuclear center formed by heme a3 and Cu(B). This cytochrome c oxidase shows proton pump activity across the membrane in addition to the electron transfer. This Paracoccus denitrificans protein is Cytochrome c oxidase subunit 1-beta (ctaDII).